The chain runs to 187 residues: Protein GrpE (187 aa).

The segment at 1-26 (MNDLKNAENGPDEADTPQGAPSQEPD) is disordered.

Belongs to the GrpE family. Homodimer.

Its subcellular location is the cytoplasm. Functionally, participates actively in the response to hyperosmotic and heat shock by preventing the aggregation of stress-denatured proteins, in association with DnaK and GrpE. It is the nucleotide exchange factor for DnaK and may function as a thermosensor. Unfolded proteins bind initially to DnaJ; upon interaction with the DnaJ-bound protein, DnaK hydrolyzes its bound ATP, resulting in the formation of a stable complex. GrpE releases ADP from DnaK; ATP binding to DnaK triggers the release of the substrate protein, thus completing the reaction cycle. Several rounds of ATP-dependent interactions between DnaJ, DnaK and GrpE are required for fully efficient folding. In Methylocella silvestris (strain DSM 15510 / CIP 108128 / LMG 27833 / NCIMB 13906 / BL2), this protein is Protein GrpE.